The chain runs to 297 residues: Phosphoribosylaminoimidazole-succinocarboxamide synthase (297 aa).

The protein belongs to the SAICAR synthetase family.

The catalysed reaction is 5-amino-1-(5-phospho-D-ribosyl)imidazole-4-carboxylate + L-aspartate + ATP = (2S)-2-[5-amino-1-(5-phospho-beta-D-ribosyl)imidazole-4-carboxamido]succinate + ADP + phosphate + 2 H(+). Its pathway is purine metabolism; IMP biosynthesis via de novo pathway; 5-amino-1-(5-phospho-D-ribosyl)imidazole-4-carboxamide from 5-amino-1-(5-phospho-D-ribosyl)imidazole-4-carboxylate: step 1/2. In Mycobacterium sp. (strain KMS), this protein is Phosphoribosylaminoimidazole-succinocarboxamide synthase.